Here is a 55-residue protein sequence, read N- to C-terminus: Large ribosomal subunit protein bL33 (55 aa).

Belongs to the bacterial ribosomal protein bL33 family.

The protein is Large ribosomal subunit protein bL33 of Gluconobacter oxydans (strain 621H) (Gluconobacter suboxydans).